Here is a 1088-residue protein sequence, read N- to C-terminus: Calcium-transporting ATPase 5, plasma membrane-type (1088 aa).

A compositionally biased stretch (low complexity) spans Met1–Ser11. Residues Met1–Ala32 are disordered. Over Met1–Thr198 the chain is Cytoplasmic. The helical transmembrane segment at Leu199 to Ile219 threads the bilayer. Residues Lys220–Glu221 lie on the Extracellular side of the membrane. The chain crosses the membrane as a helical span at residues Gly222–Thr242. The Cytoplasmic portion of the chain corresponds to Ser243–Tyr338. A helical membrane pass occupies residues Gly339–Ile359. At Ser360 to Gly375 the chain is on the extracellular side. The chain crosses the membrane as a helical span at residues Val376–Leu396. Over Ala397–Arg425 the chain is Cytoplasmic. A helical membrane pass occupies residues Gly426–Leu446. The Extracellular segment spans residues Pro447 to Lys851. Residue Asp486 is the 4-aspartylphosphate intermediate of the active site. N-linked (GlcNAc...) asparagine glycans are attached at residues Asn532, Asn569, and Asn737. Residues Asp794 and Asp798 each coordinate Mg(2+). A helical membrane pass occupies residues Phe852–Val872. The Cytoplasmic portion of the chain corresponds to Ser873 to Asn880. A helical membrane pass occupies residues Ala881–Thr901. Topologically, residues Glu902–Pro919 are extracellular. Residues Leu920–Leu940 form a helical membrane-spanning segment. Residues Leu941–His1000 lie on the Cytoplasmic side of the membrane. The chain crosses the membrane as a helical span at residues Leu1001–Gly1021. Topologically, residues Lys1022 to Thr1030 are extracellular. The chain crosses the membrane as a helical span at residues Trp1031–Gly1051. Topologically, residues Lys1052–Val1088 are cytoplasmic.

The protein belongs to the cation transport ATPase (P-type) (TC 3.A.3) family. Type IIB subfamily. As to quaternary structure, interacts with NOH1.

It is found in the cell membrane. It carries out the reaction Ca(2+)(in) + ATP + H2O = Ca(2+)(out) + ADP + phosphate + H(+). Activated by calmodulin. This magnesium-dependent enzyme catalyzes the hydrolysis of ATP coupled with the translocation of calcium from the cytosol out of the cell, into the endoplasmic reticulum, or into organelles. Involved in salt and drought stress tolerance. Involved in cold stress tolerance. The protein is Calcium-transporting ATPase 5, plasma membrane-type of Oryza sativa subsp. japonica (Rice).